The sequence spans 225 residues: Uracil-DNA glycosylase (225 aa).

Asp-65 serves as the catalytic Proton acceptor.

This sequence belongs to the uracil-DNA glycosylase (UDG) superfamily. UNG family.

The protein localises to the cytoplasm. The enzyme catalyses Hydrolyzes single-stranded DNA or mismatched double-stranded DNA and polynucleotides, releasing free uracil.. Excises uracil residues from the DNA which can arise as a result of misincorporation of dUMP residues by DNA polymerase or due to deamination of cytosine. The chain is Uracil-DNA glycosylase from Bacillus thuringiensis subsp. konkukian (strain 97-27).